We begin with the raw amino-acid sequence, 65 residues long: Photosystem II reaction center protein J (65 aa).

Residues 35–55 (LWLVATAGGIAVIFVLGIFFY) form a helical membrane-spanning segment.

It belongs to the PsbJ family. In terms of assembly, PSII is composed of 1 copy each of membrane proteins PsbA, PsbB, PsbC, PsbD, PsbE, PsbF, PsbH, PsbI, PsbJ, PsbK, PsbL, PsbM, PsbT, PsbX, PsbY, Psb30/Ycf12, peripheral proteins PsbO, CyanoQ (PsbQ), PsbU, PsbV and a large number of cofactors. It forms dimeric complexes.

The protein resides in the cellular thylakoid membrane. Functionally, one of the components of the core complex of photosystem II (PSII). PSII is a light-driven water:plastoquinone oxidoreductase that uses light energy to abstract electrons from H(2)O, generating O(2) and a proton gradient subsequently used for ATP formation. It consists of a core antenna complex that captures photons, and an electron transfer chain that converts photonic excitation into a charge separation. In Prochlorococcus marinus (strain MIT 9312), this protein is Photosystem II reaction center protein J.